The chain runs to 157 residues: Myosin essential light chain, striated adductor muscle (157 aa).

2 EF-hand domains span residues 7 to 44 (DEIDDLKDVFELFDFWDGRDGAVDAFKLGDVCRCLGIN) and 82 to 117 (GTFADYMEAFKTFDREGQGFISGAELRHVLTALGER).

In terms of biological role, in molluscan muscle, calcium regulation is associated with myosin rather than with actin. Muscle myosin contains two types of light chains: the catalytic light chain, essential for ATPase activity, and the regulatory light chain, a calcium-binding protein responsible for Ca(2+) dependent binding and Ca(2+) dependent Mg-ATPase activity. This chain is Myosin essential light chain, striated adductor muscle, found in Argopecten irradians (Bay scallop).